The primary structure comprises 227 residues: Ribonuclease 3 (227 aa).

Positions 4–133 (FEKLEKLLSY…LIAAIYLDSN (130 aa)) constitute an RNase III domain. Residue glutamate 46 coordinates Mg(2+). Aspartate 50 is an active-site residue. 2 residues coordinate Mg(2+): asparagine 119 and glutamate 122. Glutamate 122 is a catalytic residue. Residues 158–226 (DPKTALQEWA…ARSLLHRLKN (69 aa)) form the DRBM domain.

This sequence belongs to the ribonuclease III family. As to quaternary structure, homodimer. The cofactor is Mg(2+).

It is found in the cytoplasm. The catalysed reaction is Endonucleolytic cleavage to 5'-phosphomonoester.. Functionally, digests double-stranded RNA. Involved in the processing of primary rRNA transcript to yield the immediate precursors to the large and small rRNAs (23S and 16S). Processes some mRNAs, and tRNAs when they are encoded in the rRNA operon. Processes pre-crRNA and tracrRNA of type II CRISPR loci if present in the organism. In Rickettsia conorii (strain ATCC VR-613 / Malish 7), this protein is Ribonuclease 3.